The sequence spans 35 residues: Photosystem II reaction center protein T (35 aa).

Residues 3 to 23 (ALVYTFLLXSTLGIIFFAIFF) form a helical membrane-spanning segment.

This sequence belongs to the PsbT family. In terms of assembly, PSII is composed of 1 copy each of membrane proteins PsbA, PsbB, PsbC, PsbD, PsbE, PsbF, PsbH, PsbI, PsbJ, PsbK, PsbL, PsbM, PsbT, PsbY, PsbZ, Psb30/Ycf12, at least 3 peripheral proteins of the oxygen-evolving complex and a large number of cofactors. It forms dimeric complexes.

It localises to the plastid. The protein localises to the chloroplast thylakoid membrane. Found at the monomer-monomer interface of the photosystem II (PS II) dimer, plays a role in assembly and dimerization of PSII. PSII is a light-driven water plastoquinone oxidoreductase, using light energy to abstract electrons from H(2)O, generating a proton gradient subsequently used for ATP formation. The polypeptide is Photosystem II reaction center protein T (Cunninghamia lanceolata (China fir)).